A 485-amino-acid polypeptide reads, in one-letter code: Glutamyl-tRNA(Gln) amidotransferase subunit A (485 aa).

Catalysis depends on charge relay system residues Lys-79 and Ser-154. Ser-178 functions as the Acyl-ester intermediate in the catalytic mechanism.

Belongs to the amidase family. GatA subfamily. Heterotrimer of A, B and C subunits.

It catalyses the reaction L-glutamyl-tRNA(Gln) + L-glutamine + ATP + H2O = L-glutaminyl-tRNA(Gln) + L-glutamate + ADP + phosphate + H(+). Functionally, allows the formation of correctly charged Gln-tRNA(Gln) through the transamidation of misacylated Glu-tRNA(Gln) in organisms which lack glutaminyl-tRNA synthetase. The reaction takes place in the presence of glutamine and ATP through an activated gamma-phospho-Glu-tRNA(Gln). This is Glutamyl-tRNA(Gln) amidotransferase subunit A from Clostridium botulinum (strain Langeland / NCTC 10281 / Type F).